A 193-amino-acid polypeptide reads, in one-letter code: dCTP deaminase (193 aa).

Residues 110–115 (RSSLAR), aspartate 128, 136–138 (VLE), tyrosine 171, lysine 178, and glutamine 182 each bind dCTP. The active-site Proton donor/acceptor is the glutamate 138.

The protein belongs to the dCTP deaminase family. As to quaternary structure, homotrimer.

It catalyses the reaction dCTP + H2O + H(+) = dUTP + NH4(+). The protein operates within pyrimidine metabolism; dUMP biosynthesis; dUMP from dCTP (dUTP route): step 1/2. Catalyzes the deamination of dCTP to dUTP. The polypeptide is dCTP deaminase (Escherichia coli (strain K12 / MC4100 / BW2952)).